We begin with the raw amino-acid sequence, 159 residues long: uncharacterized protein (159 aa).

It belongs to the mimivirus L15/L51/R83 family.

This is an uncharacterized protein from Acanthamoeba polyphaga mimivirus (APMV).